We begin with the raw amino-acid sequence, 550 residues long: Probable terpene synthase 2 (550 aa).

The Mg(2+) site is built by aspartate 305, aspartate 309, and glutamate 457. A DDXXD motif motif is present at residues 305-309 (DDIYD).

Belongs to the terpene synthase family. It depends on Mg(2+) as a cofactor.

In terms of biological role, probable sesquiterpene synthase. The polypeptide is Probable terpene synthase 2 (TPS2) (Ricinus communis (Castor bean)).